The primary structure comprises 1967 residues: RQC trigger complex helicase SLH1 (1967 aa).

A Helicase ATP-binding 1 domain is found at 297 to 485; it reads PVAYKTNENM…FLGVNRQIGM (189 aa). 310-317 contacts ATP; the sequence is APTGAGKT. Positions 427–430 match the DEVH box motif; sequence DEVH. Residues 516–735 enclose the Helicase C-terminal 1 domain; the sequence is NIDKVAYDKL…NVDEAIEWLG (220 aa). Residues 795–1100 enclose the SEC63 1 domain; sequence AKDLGRVSSD…GCESTHAISF (306 aa). The 176-residue stretch at 1149–1324 folds into the Helicase ATP-binding 2 domain; the sequence is YTLYNTNENA…WLGVKDHGLY (176 aa). 1162–1169 contacts ATP; it reads SPTGSGKT. A DEAH box motif is present at residues 1266–1269; that stretch reads DEIH. Positions 1355-1550 constitute a Helicase C-terminal 2 domain; that stretch reads MNKPVFMAIK…SLHKVLDDHL (196 aa). Positions 1626–1776 constitute an SEC63 2 domain; it reads ATPFLSISSY…MMQCIKQGYW (151 aa).

Belongs to the helicase family. SKI2 subfamily. Component of the RQT (ribosome quality control trigger) complex, composed of SLH1, CUE3, and RQT4. Interacts with CUE3. Interacts with RQT4. Interacts with HEL2. Associates with translating ribosomes.

The protein resides in the cytoplasm. The protein localises to the cytosol. It carries out the reaction ATP + H2O = ADP + phosphate + H(+). In terms of biological role, involved in activation of the ribosome quality control (RQC) pathway, a pathway that degrades nascent peptide chains during problematic translation. Drives the splitting of stalled ribosomes that are polyubiquitinated in a HEL2-dependent manner, as part of the ribosome quality control trigger (RQT) complex. Also represses the translation of non-poly(A) mRNAs together with SKI2. May block translation by inhibiting translation initiation factor 5B (FUN12) action on mRNAs lacking a 3' poly(A) structure. Involved in antiviral defense, preventing L-A dsRNA virus propagation by specifically blocking translation of viral mRNAs. This is RQC trigger complex helicase SLH1 from Saccharomyces cerevisiae (strain ATCC 204508 / S288c) (Baker's yeast).